Consider the following 434-residue polypeptide: Serine hydroxymethyltransferase (434 aa).

(6S)-5,6,7,8-tetrahydrofolate contacts are provided by residues Leu-131 and 135–137 (GHL). Position 240 is an N6-(pyridoxal phosphate)lysine (Lys-240).

This sequence belongs to the SHMT family. Homodimer. Pyridoxal 5'-phosphate serves as cofactor.

It is found in the cytoplasm. The enzyme catalyses (6R)-5,10-methylene-5,6,7,8-tetrahydrofolate + glycine + H2O = (6S)-5,6,7,8-tetrahydrofolate + L-serine. It participates in one-carbon metabolism; tetrahydrofolate interconversion. Its pathway is amino-acid biosynthesis; glycine biosynthesis; glycine from L-serine: step 1/1. Catalyzes the reversible interconversion of serine and glycine with tetrahydrofolate (THF) serving as the one-carbon carrier. This reaction serves as the major source of one-carbon groups required for the biosynthesis of purines, thymidylate, methionine, and other important biomolecules. Also exhibits THF-independent aldolase activity toward beta-hydroxyamino acids, producing glycine and aldehydes, via a retro-aldol mechanism. The sequence is that of Serine hydroxymethyltransferase from Gluconobacter oxydans (strain 621H) (Gluconobacter suboxydans).